A 319-amino-acid chain; its full sequence is Nuclear hormone receptor family member nhr-174 (319 aa).

Residues 7–81 (DPVCPVCEFP…AGMKRNLVRQ (75 aa)) constitute a DNA-binding region (nuclear receptor). 2 consecutive NR C4-type zinc fingers follow at residues 10-31 (CPVC…CGAC) and 47-63 (CEKK…CRAC). The NR LBD domain occupies 130 to 319 (EAEKDVSKIL…SMKKSRYLQF (190 aa)).

It belongs to the nuclear hormone receptor family.

The protein resides in the nucleus. Functionally, orphan nuclear receptor. This Caenorhabditis elegans protein is Nuclear hormone receptor family member nhr-174 (nhr-174).